Reading from the N-terminus, the 466-residue chain is Coagulation factor VII (466 aa).

Positions 1-20 (MVSQALRLLCLLLGLQGCLA) are cleaved as a signal peptide. Residues 21–60 (AGGVAKASGGETRDMPWKPGPHRVFVTQEEAHGVLHRRRR) constitute a propeptide that is removed on maturation. The Gla domain occupies 61–105 (ANAFLEELRPGSLERECKEEQCSFEEAREIFKDAERTKLFWISYS). 4-carboxyglutamate is present on residues E66, E67, E74, E76, E79, E80, E85, E86, E89, and E95. An intrachain disulfide couples C77 to C82. The EGF-like 1; calcium-binding domain occupies 106–142 (DGDQCASSPCQNGGSCKDQLQSYICFCLPAFEGRNCE). Intrachain disulfides connect C110/C121, C115/C130, C132/C141, C151/C162, C158/C172, C174/C187, C195/C322, C219/C224, C238/C254, and C370/C389. An O-linked (Glc...) serine; alternate glycan is attached at S112. S112 carries an O-linked (Xyl...) serine; alternate glycan. Residue S120 is glycosylated (O-linked (Fuc) serine). Residue D123 is modified to (3R)-3-hydroxyaspartate. The EGF-like 2 domain occupies 147-188 (DQLICVNENGGCEQYCSDHTGTKRSCRCHEGYSLLADGVSCT). N-linked (GlcNAc...) asparagine glycosylation occurs at N205. A Peptidase S1 domain is found at 213 to 452 (IVGGKVCPKG…YIEWLQKLMR (240 aa)). Residues H253 and D302 each act as charge relay system in the active site. The N-linked (GlcNAc...) asparagine glycan is linked to N382. Residue D398 participates in substrate binding. The cysteines at positions 400 and 428 are disulfide-linked. S404 functions as the Charge relay system in the catalytic mechanism.

Belongs to the peptidase S1 family. Heterodimer of a light chain and a heavy chain linked by a disulfide bond. Interacts (activated) with iripin-8, a serine protease inhibitor from Ixodes ricinus saliva. In terms of processing, the vitamin K-dependent, enzymatic carboxylation of some glutamate residues allows the modified protein to bind calcium. Post-translationally, the iron and 2-oxoglutarate dependent 3-hydroxylation of aspartate and asparagine is (R) stereospecific within EGF domains. O- and N-glycosylated. N-glycosylation at Asn-205 occurs cotranslationally and is mediated by STT3A-containing complexes, while glycosylation at Asn-382 is post-translational and is mediated STT3B-containing complexes before folding. O-fucosylated by POFUT1 on a conserved serine or threonine residue found in the consensus sequence C2-X(4,5)-[S/T]-C3 of EGF domains, where C2 and C3 are the second and third conserved cysteines. In terms of processing, can be either O-glucosylated or O-xylosylated at Ser-112 by POGLUT1 in vitro. As to expression, plasma.

It localises to the secreted. It catalyses the reaction Selective cleavage of Arg-|-Ile bond in factor X to form factor Xa.. In terms of biological role, initiates the extrinsic pathway of blood coagulation. Serine protease that circulates in the blood in a zymogen form. Factor VII is converted to factor VIIa by factor Xa, factor XIIa, factor IXa, or thrombin by minor proteolysis. In the presence of tissue factor and calcium ions, factor VIIa then converts factor X to factor Xa by limited proteolysis. Factor VIIa also converts factor IX to factor IXa in the presence of tissue factor and calcium. The polypeptide is Coagulation factor VII (F7) (Homo sapiens (Human)).